Reading from the N-terminus, the 424-residue chain is 3-phosphoshikimate 1-carboxyvinyltransferase (424 aa).

The 3-phosphoshikimate site is built by lysine 20, serine 21, and arginine 25. Lysine 20 provides a ligand contact to phosphoenolpyruvate. The phosphoenolpyruvate site is built by glycine 92 and arginine 120. The 3-phosphoshikimate site is built by serine 165, glutamine 167, aspartate 313, and lysine 340. Glutamine 167 serves as a coordination point for phosphoenolpyruvate. The Proton acceptor role is filled by aspartate 313. The phosphoenolpyruvate site is built by arginine 344 and arginine 386.

Belongs to the EPSP synthase family. Monomer.

It localises to the cytoplasm. The catalysed reaction is 3-phosphoshikimate + phosphoenolpyruvate = 5-O-(1-carboxyvinyl)-3-phosphoshikimate + phosphate. Its pathway is metabolic intermediate biosynthesis; chorismate biosynthesis; chorismate from D-erythrose 4-phosphate and phosphoenolpyruvate: step 6/7. In terms of biological role, catalyzes the transfer of the enolpyruvyl moiety of phosphoenolpyruvate (PEP) to the 5-hydroxyl of shikimate-3-phosphate (S3P) to produce enolpyruvyl shikimate-3-phosphate and inorganic phosphate. This is 3-phosphoshikimate 1-carboxyvinyltransferase from Bacillus cytotoxicus (strain DSM 22905 / CIP 110041 / 391-98 / NVH 391-98).